Reading from the N-terminus, the 166-residue chain is Thioredoxin, mitochondrial (166 aa).

The transit peptide at 1–59 (MAQRLLLRRFLTSIISGKPSQSRWAPVASRALQTPQYSPGYLTVTPSQARSIYTTRVCS) directs the protein to the mitochondrion. In terms of domain architecture, Thioredoxin spans 61 to 166 (TFNIQDGPDF…LEAFLKKLIG (106 aa)). Active-site nucleophile residues include Cys90 and Cys93. Cys90 and Cys93 form a disulfide bridge. Lys152 is subject to N6-acetyllysine; alternate. Position 152 is an N6-succinyllysine; alternate (Lys152).

This sequence belongs to the thioredoxin family. In terms of assembly, monomer.

The protein localises to the mitochondrion. Its function is as follows. Important for the control of mitochondrial reactive oxygen species homeostasis, apoptosis regulation and cell viability. Is involved in various redox reactions including the reduction of protein disulfide bonds, through the reversible oxidation of its active center dithiol to a disulfide. This is Thioredoxin, mitochondrial (TXN2) from Bos taurus (Bovine).